A 320-amino-acid polypeptide reads, in one-letter code: Methylenetetrahydrofolate dehydrogenase [NAD(+)] (320 aa).

The active site involves Cys-152. NAD(+) is bound by residues 187–188 (RS) and 210–211 (DI).

The protein belongs to the tetrahydrofolate dehydrogenase/cyclohydrolase family. As to quaternary structure, homodimer.

Its subcellular location is the cytoplasm. The protein localises to the nucleus. It carries out the reaction (6R)-5,10-methylene-5,6,7,8-tetrahydrofolate + NAD(+) = (6R)-5,10-methenyltetrahydrofolate + NADH. The protein operates within one-carbon metabolism; tetrahydrofolate interconversion. Functionally, catalyzes oxidation of cytoplasmic one-carbon units for purine biosynthesis. The protein is Methylenetetrahydrofolate dehydrogenase [NAD(+)] (mtd1) of Schizosaccharomyces pombe (strain 972 / ATCC 24843) (Fission yeast).